The following is a 218-amino-acid chain: Sodium channel regulatory subunit beta-1 (218 aa).

A signal peptide spans 1-18 (MGRLLALVVGAALVSSAC). Over 19–157 (GGCVEVDSET…DKANRDMASI (139 aa)) the chain is Extracellular. Disulfide bonds link cysteine 21/cysteine 43 and cysteine 40/cysteine 121. One can recognise an Ig-like C2-type domain in the interval 22–150 (VEVDSETEAV…KIHIEVVDKA (129 aa)). N-linked (GlcNAc...) asparagine glycans are attached at residues asparagine 93, asparagine 110, asparagine 114, and asparagine 135. The chain crosses the membrane as a helical span at residues 158 to 179 (VSEIMMYVLIVVLTIWLVAEMI). The Cytoplasmic segment spans residues 180–218 (YCYKKIAAATETAAQENASEYLAITSESKENCTGVQVAE).

The protein belongs to the sodium channel auxiliary subunit SCN1B (TC 8.A.17) family. In terms of assembly, voltage-gated sodium (Nav) channel consists of an ion-conducting pore-forming alpha subunit functional on its own that is regulated by one or more beta subunits. Interacts with SCN1A; regulatory subunit of SCN1A/Nav1.1. Interacts with SCN3A; regulatory subunit of SCN3A/Nav1.3. Interacts with SCN4A; regulatory subunit of SCN4A/Nav1.4. Interacts with SCN5A; regulatory subunit of SCN5A/Nav1.5. Interacts with SCN8A; regulatory subunit of SCN8A/Nav1.6. Interacts with SCN9A; regulatory subunit of SCN9A/Nav1.7. Interacts with SCN10A; regulatory subunit of SCN10A/Nav1.8. Interacts with NFASC. Interacts with TMEM65. As to expression, the overall expression of isoform 1 and isoform 2 is very similar. Isoform 1 is abundantly expressed in skeletal muscle, heart and brain. Isoform 2 is highly expressed in brain and skeletal muscle and present at a very low level in heart, placenta, lung, liver, kidney and pancreas. In brain, isoform 2 is most abundant in the cerebellum, followed by the cerebral cortex and occipital lobe, while isoform 1 levels are higher in the cortex compared to the cerebellum. Isoform 2 is expressed in many regions of the brain, including cerebellar Purkinje cells, cortex pyramidal neurons and many of the neuronal fibers throughout the brain (at protein level). Also detected in dorsal root ganglion, in fibers of the spinal nerve and in cortical neurons and their processes (at protein level).

It localises to the cell membrane. The protein localises to the perikaryon. It is found in the cell projection. The protein resides in the axon. Its subcellular location is the secreted. Functionally, regulatory subunit of multiple voltage-gated sodium (Nav) channels directly mediating the depolarization of excitable membranes. Navs, also called VGSCs (voltage-gated sodium channels) or VDSCs (voltage-dependent sodium channels), operate by switching between closed and open conformations depending on the voltage difference across the membrane. In the open conformation they allow Na(+) ions to selectively pass through the pore, along their electrochemical gradient. The influx of Na+ ions provokes membrane depolarization, initiating the propagation of electrical signals throughout cells and tissues. The accessory beta subunits participate in localization and functional modulation of the Nav channels. Modulates the activity of SCN1A/Nav1.1, SCN2A/Nav1.2, SCN3A/Nav1.3, SCN4A/Nav1.4, SCN5A/Nav1.5, SCN8A/Nav1.6, SCN9A/Nav1.7 and SCN10A/Nav1.8. Cell adhesion molecule that plays a critical role in neuronal migration and pathfinding during brain development. Stimulates neurite outgrowth. Has no regulatory function on the SCN2A sodium channel complex. In Homo sapiens (Human), this protein is Sodium channel regulatory subunit beta-1.